Consider the following 142-residue polypeptide: Ribosome-binding factor A (142 aa).

Positions 119–142 are disordered; the sequence is EAKQKQHGVETDAEQGETKDEGDK.

This sequence belongs to the RbfA family. As to quaternary structure, monomer. Binds 30S ribosomal subunits, but not 50S ribosomal subunits or 70S ribosomes.

Its subcellular location is the cytoplasm. Functionally, one of several proteins that assist in the late maturation steps of the functional core of the 30S ribosomal subunit. Associates with free 30S ribosomal subunits (but not with 30S subunits that are part of 70S ribosomes or polysomes). Required for efficient processing of 16S rRNA. May interact with the 5'-terminal helix region of 16S rRNA. The polypeptide is Ribosome-binding factor A (Shewanella halifaxensis (strain HAW-EB4)).